The primary structure comprises 182 residues: MKQLLDFIPLIIFFTVYKLHDIYAATGALMATTLLQMIVVWVMYKKLERSHWITLVLVLGFGAMTLFFHNEAFIKWKVTVLYAAFGSALWISQFLFRKPLIKKMLGKEMSLPDAVWNRINFSWGLFFWMVGALNVYIAFYLPTEIWVDFKVFGVLGLMLVSTLLTGIYIYRYLPTNNQQDKE.

The next 5 helical transmembrane spans lie at 22–42 (IYAA…VVWV), 53–73 (ITLV…NEAF), 76–96 (WKVT…QFLF), 121–141 (FSWG…AFYL), and 149–169 (FKVF…GIYI).

This sequence belongs to the YciB family.

It is found in the cell inner membrane. Its function is as follows. Plays a role in cell envelope biogenesis, maintenance of cell envelope integrity and membrane homeostasis. The sequence is that of Inner membrane-spanning protein YciB from Tolumonas auensis (strain DSM 9187 / NBRC 110442 / TA 4).